Consider the following 318-residue polypeptide: NADH-ubiquinone oxidoreductase chain 1 (318 aa).

The next 9 helical transmembrane spans lie at 2-22, 37-57, 69-89, 100-120, 136-156, 171-191, 231-251, 253-273, and 293-313; these read FLMNILCLVIPILLAMAFLTL, PNIVGPYGLLQPIADAIKLFI, LMFTLAPTLAFTLALSLWIPM, LGVLFILALSSLAVYSILWSG, VAQTISYEVTLAIILLSIMMM, HMWLIFPLWPLAMMWFISTLA, IIMMNALTTTLFLGAFHNPLF, ELFTVNFITKTLILTMMFLWV, and FLPLTLALCMFHVSMPALSAG.

Belongs to the complex I subunit 1 family. Core subunit of respiratory chain NADH dehydrogenase (Complex I) which is composed of 45 different subunits.

The protein localises to the mitochondrion inner membrane. It carries out the reaction a ubiquinone + NADH + 5 H(+)(in) = a ubiquinol + NAD(+) + 4 H(+)(out). Its function is as follows. Core subunit of the mitochondrial membrane respiratory chain NADH dehydrogenase (Complex I) which catalyzes electron transfer from NADH through the respiratory chain, using ubiquinone as an electron acceptor. Essential for the catalytic activity and assembly of complex I. This is NADH-ubiquinone oxidoreductase chain 1 (MT-ND1) from Euphractus sexcinctus (Six-banded armadillo).